The sequence spans 626 residues: Threonine--tRNA ligase (626 aa).

The editing domain stretch occupies residues 1-144; it reads MRMLLIHADY…LSRTIVPEEG (144 aa). Positions 207 to 506 are catalytic; it reads PHVRLMLEHE…QAQGKKPMFP (300 aa). The Zn(2+) site is built by Cys299, His351, and His475.

It belongs to the class-II aminoacyl-tRNA synthetase family. As to quaternary structure, homodimer. Zn(2+) is required as a cofactor.

The protein localises to the cytoplasm. The enzyme catalyses tRNA(Thr) + L-threonine + ATP = L-threonyl-tRNA(Thr) + AMP + diphosphate + H(+). Functionally, catalyzes the attachment of threonine to tRNA(Thr) in a two-step reaction: L-threonine is first activated by ATP to form Thr-AMP and then transferred to the acceptor end of tRNA(Thr). Also edits incorrectly charged L-seryl-tRNA(Thr). This is Threonine--tRNA ligase from Thermococcus gammatolerans (strain DSM 15229 / JCM 11827 / EJ3).